Reading from the N-terminus, the 59-residue chain is Large ribosomal subunit protein bL32 (59 aa).

The disordered stretch occupies residues 1 to 24 (MAVQQNKKSPSKRGMHRSHDFLTS).

The protein belongs to the bacterial ribosomal protein bL32 family.

The protein is Large ribosomal subunit protein bL32 of Ralstonia nicotianae (strain ATCC BAA-1114 / GMI1000) (Ralstonia solanacearum).